The sequence spans 296 residues: Magnetosome protein MamB (296 aa).

Residues 1-12 (MKFENCRDCREE) are Cytoplasmic-facing. The interval 1 to 214 (MKFENCRDCR…GLMDSSVDTE (214 aa)) is transmembrane domain (TMD). A helical membrane pass occupies residues 13–33 (VVWWAFTADICMTLFKGVLGL). Topologically, residues 34–83 (MSGSVALVADSLHSGADVVASGVTQLSLKISNKPADERYPFGYGNIQYIS) are lumenal. Residues 84 to 104 (SSIVGSLLLIGASFLMYGSVM) traverse the membrane as a helical segment. Residues 105–112 (KLISGTYE) lie on the Cytoplasmic side of the membrane. Residues 113–133 (APSIFAAVGASVTVIVNELMY) form a helical membrane-spanning segment. Topologically, residues 134–164 (RYQICVGNENNSPAIIANAWDNRSDAISSAA) are lumenal. Residues 165–185 (VMVGVIASVIGFPIADTIAAI) form a helical membrane-spanning segment. Over 186-296 (GVSALVGRIG…SPAPAAAARA (111 aa)) the chain is Cytoplasmic. The tract at residues 215–296 (LLQTAWQVAM…SPAPAAAARA (82 aa)) is C-terminal domain (CTD).

It belongs to the cation diffusion facilitator (CDF) transporter (TC 2.A.4) family. Forms heterodimers with MamM. Probably interacts with MamE.

It localises to the magnetosome membrane. In terms of biological role, plays a dual, essential role in magnetosome formation; required for magnetosome vesicle formation as well as biomineralization. Probably binds and transports iron. Requires heterodimerization with MamM for stability. This Paramagnetospirillum magneticum (strain ATCC 700264 / AMB-1) (Magnetospirillum magneticum) protein is Magnetosome protein MamB (mamB).